We begin with the raw amino-acid sequence, 198 residues long: V-type ATP synthase subunit E (198 aa).

Belongs to the V-ATPase E subunit family.

Its function is as follows. Produces ATP from ADP in the presence of a proton gradient across the membrane. The protein is V-type ATP synthase subunit E of Acetivibrio thermocellus (strain ATCC 27405 / DSM 1237 / JCM 9322 / NBRC 103400 / NCIMB 10682 / NRRL B-4536 / VPI 7372) (Clostridium thermocellum).